The primary structure comprises 538 residues: Importin subunit alpha-6 (538 aa).

The IBB domain occupies 1 to 58 (MSYKPSAKTEVRRNRYKVSVDADEGRRRREDNMVEIRKNKREENLQKKRREGFNPSMA). A disordered region spans residues 1-69 (MSYKPSAKTE…QPGQDFSSSL (69 aa)). The segment covering 7 to 46 (AKTEVRRNRYKVSVDADEGRRRREDNMVEIRKNKREENLQ) has biased composition (basic and acidic residues). A compositionally biased stretch (polar residues) spans 56–69 (SMASQPGQDFSSSL). ARM repeat units follow at residues 109-149 (NPPI…NIAS), 152-191 (SENT…NVAG), 194-234 (PKCR…NFCR), 236-275 (KPQP…YLSD), 278-317 (NEKI…NIVT), 320-360 (DIQT…NITA), 363-402 (TSQI…NATS), and 406-445 (HDQI…NILK).

It belongs to the importin alpha family. Forms a complex with importin subunit beta-1.

The protein resides in the nucleus envelope. In terms of biological role, binds to conventional NLS motifs and mediates nuclear protein import across the nuclear envelope. Acts as a cellular receptor for the nuclear import of the virD2 protein of Agrobacterium, but is not essential for Agrobacterium-mediated root transformation. The polypeptide is Importin subunit alpha-6 (Arabidopsis thaliana (Mouse-ear cress)).